Consider the following 188-residue polypeptide: Large ribosomal subunit protein uL22 (188 aa).

The segment at 155-188 is disordered; it reads STPEGAKKGKKKKGTKDAVEKSSKRVKTAATAAH.

Belongs to the universal ribosomal protein uL22 family.

The chain is Large ribosomal subunit protein uL22 (RpL17) from Agriotes lineatus (Lined click beetle).